The sequence spans 122 residues: Ribonuclease P protein component (122 aa).

The protein belongs to the RnpA family. As to quaternary structure, consists of a catalytic RNA component (M1 or rnpB) and a protein subunit.

The enzyme catalyses Endonucleolytic cleavage of RNA, removing 5'-extranucleotides from tRNA precursor.. In terms of biological role, RNaseP catalyzes the removal of the 5'-leader sequence from pre-tRNA to produce the mature 5'-terminus. It can also cleave other RNA substrates such as 4.5S RNA. The protein component plays an auxiliary but essential role in vivo by binding to the 5'-leader sequence and broadening the substrate specificity of the ribozyme. The chain is Ribonuclease P protein component from Roseiflexus sp. (strain RS-1).